The primary structure comprises 413 residues: NADH-quinone oxidoreductase subunit D (413 aa).

It belongs to the complex I 49 kDa subunit family. NDH-1 is composed of 14 different subunits. Subunits NuoB, C, D, E, F, and G constitute the peripheral sector of the complex.

The protein localises to the cell inner membrane. It catalyses the reaction a quinone + NADH + 5 H(+)(in) = a quinol + NAD(+) + 4 H(+)(out). Its function is as follows. NDH-1 shuttles electrons from NADH, via FMN and iron-sulfur (Fe-S) centers, to quinones in the respiratory chain. The immediate electron acceptor for the enzyme in this species is believed to be ubiquinone. Couples the redox reaction to proton translocation (for every two electrons transferred, four hydrogen ions are translocated across the cytoplasmic membrane), and thus conserves the redox energy in a proton gradient. The polypeptide is NADH-quinone oxidoreductase subunit D (Rhodobacter capsulatus (Rhodopseudomonas capsulata)).